A 206-amino-acid chain; its full sequence is Fibroblast growth factor 4 (206 aa).

The first 29 residues, 1-29 (MAGPGTAAAALLPAVLLAVLAPWAGRGGA), serve as a signal peptide directing secretion.

Belongs to the heparin-binding growth factors family. In terms of assembly, interacts with FGFR1, FGFR2, FGFR3 and FGFR4. Affinity between fibroblast growth factors (FGFs) and their receptors is increased by heparan sulfate glycosaminoglycans that function as coreceptors.

It is found in the secreted. Functionally, plays an important role in the regulation of embryonic development, cell proliferation, and cell differentiation. Required for normal limb and cardiac valve development during embryogenesis. May play a role in embryonic molar tooth bud development via inducing the expression of MSX1, MSX2 and MSX1-mediated expression of SDC1 in dental mesenchyme cells. The chain is Fibroblast growth factor 4 from Bos taurus (Bovine).